We begin with the raw amino-acid sequence, 440 residues long: Probable cytosolic iron-sulfur protein assembly protein 1 (440 aa).

WD repeat units follow at residues 12–51 (AHAE…SSDG), 71–110 (DHKR…SDDE), 148–187 (GHES…DFEC), 193–233 (EHSQ…WCIF), 278–317 (EEDE…PDSA), 326–379 (AHSR…SPSS), and 401–440 (HGVN…VVRD). The span at 107–116 (SDDEEEEDEG) shows a compositional bias: acidic residues. The tract at residues 107-137 (SDDEEEEDEGAQGVYKPAGVDSDGDGDGGKE) is disordered.

This sequence belongs to the WD repeat CIA1 family.

In terms of biological role, essential component of the cytosolic iron-sulfur (Fe/S) protein assembly machinery. Required for the maturation of extramitochondrial Fe/S proteins. The polypeptide is Probable cytosolic iron-sulfur protein assembly protein 1 (Cryptococcus neoformans var. neoformans serotype D (strain B-3501A) (Filobasidiella neoformans)).